Reading from the N-terminus, the 301-residue chain is Protease HtpX (301 aa).

The next 2 helical transmembrane spans lie at 4–24 (IGLF…VLFI) and 44–64 (TGLL…SLAM). Histidine 150 is a Zn(2+) binding site. Glutamate 151 is a catalytic residue. Residue histidine 154 participates in Zn(2+) binding. Helical transmembrane passes span 165 to 185 (LIQG…GHFV) and 201 to 221 (FITS…IVMW). Residue glutamate 227 coordinates Zn(2+).

This sequence belongs to the peptidase M48B family. Zn(2+) serves as cofactor.

It localises to the cell inner membrane. The protein is Protease HtpX of Alkalilimnicola ehrlichii (strain ATCC BAA-1101 / DSM 17681 / MLHE-1).